A 396-amino-acid polypeptide reads, in one-letter code: Probable sugar efflux transporter (396 aa).

A run of 12 helical transmembrane segments spans residues 15–35, 51–71, 84–104, 109–129, 137–157, 168–188, 209–229, 245–265, 273–293, 297–317, 333–353, and 365–385; these read VLIM…PVAM, GLMM…AMLA, LFII…FWIL, MCIA…VMRI, QALG…LPIG, VTFG…IRLL, PLLL…FTAY, NFAT…SLLF, PTKF…LLLF, TIIA…CIGL, VATA…ALFG, and IGYT…TTHL.

Belongs to the major facilitator superfamily. SotB (TC 2.A.1.2) family.

The protein resides in the cell inner membrane. Functionally, involved in the efflux of sugars. The physiological role may be the reduction of the intracellular concentration of toxic sugars or sugar metabolites. This is Probable sugar efflux transporter from Haemophilus influenzae (strain ATCC 51907 / DSM 11121 / KW20 / Rd).